The following is a 340-amino-acid chain: Phenylalanine--tRNA ligase alpha subunit (340 aa).

E255 contributes to the Mg(2+) binding site.

This sequence belongs to the class-II aminoacyl-tRNA synthetase family. Phe-tRNA synthetase alpha subunit type 1 subfamily. In terms of assembly, tetramer of two alpha and two beta subunits. It depends on Mg(2+) as a cofactor.

Its subcellular location is the cytoplasm. It carries out the reaction tRNA(Phe) + L-phenylalanine + ATP = L-phenylalanyl-tRNA(Phe) + AMP + diphosphate + H(+). The polypeptide is Phenylalanine--tRNA ligase alpha subunit (Moorella thermoacetica (strain ATCC 39073 / JCM 9320)).